A 203-amino-acid chain; its full sequence is MSSCVEKSRGRNPYAAVQVDPDSDYITPGTLDLEQLFWSGPTAQYAHVNQVWPRIYLGDEKTALERPALKDLGITHVLNAAVGKWNNVLTGADYYTGMNIRYLGVEADDKPTFNISQYFSQAAEFIHEALIHPVLVHCVMGRSRSATLVLAYLMIKEHLSVVDAVEHVRQRRCILPNHGFLKQLRALDIALQEEKLRLKRKDE.

The Tyrosine-protein phosphatase domain maps to 47–193; sequence HVNQVWPRIY…LRALDIALQE (147 aa). 137–144 is a binding site for substrate; it reads HCVMGRSR. C138 (phosphocysteine intermediate) is an active-site residue.

This sequence belongs to the protein-tyrosine phosphatase family. Non-receptor class dual specificity subfamily.

It localises to the cytoplasm. The protein resides in the nucleus. The enzyme catalyses O-phospho-L-tyrosyl-[protein] + H2O = L-tyrosyl-[protein] + phosphate. It catalyses the reaction O-phospho-L-seryl-[protein] + H2O = L-seryl-[protein] + phosphate. The catalysed reaction is O-phospho-L-threonyl-[protein] + H2O = L-threonyl-[protein] + phosphate. Functionally, dual specificity phosphatase able to dephosphorylate phosphotyrosine, phosphoserine and phosphothreonine residues within the same substrate, with a preference for phosphotyrosine as a substrate. Involved in the modulation of AMPK and MAPK1/2 signaling pathways. The polypeptide is Dual specificity phosphatase 29 (dusp29) (Oryzias latipes (Japanese rice fish)).